We begin with the raw amino-acid sequence, 459 residues long: Hepatocyte nuclear factor 3-beta (459 aa).

The segment at 14–93 is transactivation domain 1; that stretch reads DWSSYYAEPE…AGAMAGMSGS (80 aa). A Nuclear localization signal motif is present at residues 106 to 113; the sequence is LSPSLSPL. At Thr156 the chain carries Phosphothreonine. The fork-head DNA-binding region spans 159-252; that stretch reads KPPYSYISLI…FENGCYLRRQ (94 aa). Ser212 carries the post-translational modification Phosphoserine. Positions 268 to 281 are enriched in low complexity; the sequence is GAASSGGKKTAPGS. The disordered stretch occupies residues 268–366; the sequence is GAASSGGKKT…PGLPPEAHLK (99 aa). Ser284 carries the phosphoserine modification. The span at 295-311 shows a compositional bias: polar residues; it reads ASETPAGTESPHSSASP. The residue at position 302 (Thr302) is a Phosphothreonine. Phosphoserine occurs at positions 304, 307, 308, and 310. The span at 340–353 shows a compositional bias: low complexity; it reads PGQQQQAAAHLLGP. Residues 362–459 are transactivation domain 2; sequence EAHLKPEHHY…VYSRPIMNSS (98 aa). A phosphoserine mark is found at Ser438 and Ser459.

Binds DNA as a monomer. Binds TLE1. Interacts with FOXA1 and FOXA3. Interacts with PRKDC. Interacts with AKT1. Interacts with TET1; this interaction may recruit TET1 to specific genomic loci to mediate their demethylation. In terms of processing, phosphorylation on Thr-156 abolishes binding to target promoters and subsequent transcription activation upon insulin stimulation. As to expression, restricted mainly to endoderm-derived tissues (lung, liver, stomach, and small intestine). Expressed in epididymis with region-specific expression pattern: no expression is observed in initial segment, low expression in proximal caput, gradiently higher levels of expression in middle and distal caput and highest level in corpus and cauda (at protein level).

The protein resides in the nucleus. Its subcellular location is the cytoplasm. Its function is as follows. Transcription factor that is involved in embryonic development, establishment of tissue-specific gene expression and regulation of gene expression in differentiated tissues. Is thought to act as a 'pioneer' factor opening the compacted chromatin for other proteins through interactions with nucleosomal core histones and thereby replacing linker histones at target enhancer and/or promoter sites. Binds DNA with the consensus sequence 5'-[AC]A[AT]T[AG]TT[GT][AG][CT]T[CT]-3'. In embryonic development is required for notochord formation. Involved in the development of multiple endoderm-derived organ systems such as the liver, pancreas and lungs; Foxa1 and Foxa2 seem to have at least in part redundant roles. FOXA1 and FOXA2 are essential for hepatic specification. FOXA1 and FOXA2 are required for morphogenesis and cell differentiation during formation of the lung. FOXA1 and FOXA2 are involved in bile duct formation; they positively regulate the binding glucocorticoid receptor/NR3C1 to the IL6 promoter. FOXA1 and FOXA2 regulate multiple phases of midbrain dopaminergic neuron development; they regulate expression of NEUROG2 at the beginning of mDA neurogenesis and of NR4A2 and EN1 in immature mDA neurons. Modulates the transcriptional activity of nuclear hormone receptors; inhibits AR-mediated transcription from the LCN5 promoter. Binds to fibrinogen beta promoter and is involved in IL6-induced fibrinogen beta transcriptional activation. Originally described as a transcription activator for a number of liver genes such as AFP, albumin, tyrosine aminotransferase, PEPCK, etc. Interacts with the cis-acting regulatory regions of these genes. Involved in glucose homeostasis; regulates the expression of genes important for glucose sensing in pancreatic beta-cells and glucose homeostasis. In pancreatic beta cells activates transcription of potassium channel subunits KCNJ11 and ABCC8. Involved in regulation of fat metabolism; activates transcriptional programs of lipid metabolism and ketogenesis at low insulin state. Involved in transcriptional regulation of MUC2 in the intestine. The polypeptide is Hepatocyte nuclear factor 3-beta (Foxa2) (Mus musculus (Mouse)).